We begin with the raw amino-acid sequence, 316 residues long: tRNA pseudouridine synthase B (316 aa).

Asp-47 serves as the catalytic Nucleophile.

This sequence belongs to the pseudouridine synthase TruB family. Type 1 subfamily.

It carries out the reaction uridine(55) in tRNA = pseudouridine(55) in tRNA. Responsible for synthesis of pseudouridine from uracil-55 in the psi GC loop of transfer RNAs. The protein is tRNA pseudouridine synthase B of Aliivibrio fischeri (strain ATCC 700601 / ES114) (Vibrio fischeri).